The following is a 341-amino-acid chain: S-adenosylmethionine:tRNA ribosyltransferase-isomerase (341 aa).

This sequence belongs to the QueA family. As to quaternary structure, monomer.

It localises to the cytoplasm. The enzyme catalyses 7-aminomethyl-7-carbaguanosine(34) in tRNA + S-adenosyl-L-methionine = epoxyqueuosine(34) in tRNA + adenine + L-methionine + 2 H(+). Its pathway is tRNA modification; tRNA-queuosine biosynthesis. Its function is as follows. Transfers and isomerizes the ribose moiety from AdoMet to the 7-aminomethyl group of 7-deazaguanine (preQ1-tRNA) to give epoxyqueuosine (oQ-tRNA). In Clostridium botulinum (strain Kyoto / Type A2), this protein is S-adenosylmethionine:tRNA ribosyltransferase-isomerase.